Here is a 322-residue protein sequence, read N- to C-terminus: FAD-dependent monooxygenase subE (322 aa).

4 residues coordinate FAD: Glu-35, Gly-49, Arg-108, and Asp-313.

It belongs to the paxM FAD-dependent monooxygenase family. FAD is required as a cofactor.

The protein operates within secondary metabolite biosynthesis; terpenoid biosynthesis. Its function is as follows. FAD-dependent monooxygenase; part of the gene cluster that mediates the biosynthesis of the immunosuppressants subglutinols, meroterpenoids consisting of an alpha-pyrone (4-hydroxy-5,6-dimethyl-2-pyrone) moiety attached to a decalin core fused to a five-membered cyclic ether carrying a prenylside chain. The first step of the pathway is the synthesis of the alpha-pyrone moiety by the polyketide synthase subA via condensation of one acetyl-CoA starter unit with 3 malonyl-CoA units and 2 methylations. The alpha-pyrone is then combined with geranylgeranyl pyrophosphate (GGPP) formed by the GGPP synthase subD through the action of the prenyltransferase subC to yield a linear alpha-pyrone diterpenoid. Subsequent steps in the subglutinol biosynthetic pathway involve the decalin core formation, which is thought to be initiated by the epoxidation of the C10-C11 olefin by the FAD-dependent oxidoreductase subE. The following cyclization cascade would be catalyzed by the terpene cyclase subB. Lastly, the FAD-dependent dehydrogenase subF probably catalyzes the five-membered cyclic ether formation to complete the formation of subglutinol A. Subsequent redox reactions appear to give rise to subglutinol C and D, however, it remains unclear which enzymes are responsible for these transformations. SubD may have secondary function in the conversion of the identified subglutinols to subglutinol analog 45, which seems to be the major product of the cluster. The protein is FAD-dependent monooxygenase subE of Metarhizium robertsii (strain ARSEF 23 / ATCC MYA-3075) (Metarhizium anisopliae (strain ARSEF 23)).